The sequence spans 320 residues: Cytochrome f (320 aa).

The first 35 residues, 1–35 (MQNRNTFSWVKDQMSRFISVSIMIYVITRTSISNA), serve as a signal peptide directing secretion. Heme contacts are provided by Y36, C56, C59, and H60. A helical transmembrane segment spans residues 286 to 306 (VQGLLFFFASVILAQIFLVLK).

Belongs to the cytochrome f family. In terms of assembly, the 4 large subunits of the cytochrome b6-f complex are cytochrome b6, subunit IV (17 kDa polypeptide, petD), cytochrome f and the Rieske protein, while the 4 small subunits are PetG, PetL, PetM and PetN. The complex functions as a dimer. Requires heme as cofactor.

The protein resides in the plastid. Its subcellular location is the chloroplast thylakoid membrane. In terms of biological role, component of the cytochrome b6-f complex, which mediates electron transfer between photosystem II (PSII) and photosystem I (PSI), cyclic electron flow around PSI, and state transitions. The polypeptide is Cytochrome f (Ceratophyllum demersum (Rigid hornwort)).